The primary structure comprises 324 residues: Carbonic anhydrase 15 (324 aa).

The first 18 residues, 1-18, serve as a signal peptide directing secretion; the sequence is MWALDFLLSFLLIQLAAQ. The Alpha-carbonic anhydrase domain maps to 23-293; that stretch reads GTWCYDSQDP…LGGRRISASP (271 aa). The active-site Proton acceptor is His90. Positions 122, 124, and 147 each coordinate Zn(2+). Residue Tyr155 is part of the active site. 3 N-linked (GlcNAc...) asparagine glycosylation sites follow: Asn184, Asn194, and Asn203. Residue 231–232 coordinates substrate; it reads TT. The segment at 269-290 is disordered; sequence LHPRPLTSNFRPQQPLGGRRIS.

This sequence belongs to the alpha-carbonic anhydrase family. The cofactor is Zn(2+).

It localises to the secreted. The catalysed reaction is hydrogencarbonate + H(+) = CO2 + H2O. Its activity is regulated as follows. Repressed by coumarins. Its function is as follows. Reversible hydration of carbon dioxide. The chain is Carbonic anhydrase 15 (Ca15) from Mus musculus (Mouse).